An 835-amino-acid polypeptide reads, in one-letter code: uncharacterized protein (835 aa).

Disordered stretches follow at residues 1–38 (MKTSRLSTVPTSSSSTSTSSSPSSSSGSGSSTNTVGSR), 317–477 (DFDL…QSGR), 489–668 (SLSK…IKRR), 721–750 (DLENNNNNNSNSNSNSNSNNNSKRSSVSSF), and 810–835 (QEQQEGEQQEERQQEQILDEDDELMF). 3 stretches are compositionally biased toward low complexity: residues 7-37 (STVPTSSSSTSTSSSPSSSSGSGSSTNTVGS), 328-351 (NNNNNNDNNNNNNTSTTRSKTPTT), and 361-395 (SSTNTTPTTTTTTTTTTTPNKTQSSSSTSLRSGSS). Polar residues-rich tracts occupy residues 396–406 (IGNRTEVSSSI) and 415–424 (IIRSKSSLGT). Residues 432 to 442 (GGSGGGGGGGM) are compositionally biased toward gly residues. Over residues 449-477 (PISKTPTTMITKTASSSSPNLATSTQSGR) the composition is skewed to polar residues. Over residues 489–510 (SLSKQSSSSNLTRSLPPIIKSP) the composition is skewed to low complexity. Over residues 511-521 (ISPPGPTPPAP) the composition is skewed to pro residues. Over residues 522–629 (TLTKSKSTPS…STTSSATKKS (108 aa)) the composition is skewed to low complexity. Residues 631 to 640 (ITKTNPTDEQ) show a composition bias toward polar residues. Low complexity-rich tracts occupy residues 641-664 (TTTPKSITKTTTTTTTANSTSTSS) and 724-750 (NNNNNNSNSNSNSNSNNNSKRSSVSSF). Acidic residues predominate over residues 826–835 (ILDEDDELMF).

This is an uncharacterized protein from Dictyostelium discoideum (Social amoeba).